A 269-amino-acid polypeptide reads, in one-letter code: Aquaporin-1 (269 aa).

The Cytoplasmic segment spans residues 2–11; it reads ASEFKKKLFW. A helical transmembrane segment spans residues 12 to 29; that stretch reads RAVVAEFLATTLFVFISI. Topologically, residues 30-46 are extracellular; it reads GSALGFKYPVGNNQTAV. N-linked (GlcNAc...) asparagine glycosylation is present at Asn42. Residues 47–65 form a helical membrane-spanning segment; it reads QDNVKVSLAFGLSIATLAQ. Residues 66–68 are Cytoplasmic-facing; the sequence is SVG. The stretch at 69–82 is an intramembrane region; the sequence is HISGAHLNPAVTLG. The NPA 1 signature appears at 76-78; that stretch reads NPA. Over 83–90 the chain is Cytoplasmic; sequence LLLSCQIS. Residues 91-109 traverse the membrane as a helical segment; it reads IFRALMYIIAQCVGAIVAT. Residues 110–133 lie on the Extracellular side of the membrane; it reads AILSGITSSLTGNSLGRNDLADGV. Residues 134 to 153 traverse the membrane as a helical segment; sequence NSGQGLGIEIIGTLQLVLCV. The Cytoplasmic segment spans residues 154–163; that stretch reads LATTDRRRRD. A helical transmembrane segment spans residues 164-181; the sequence is LGGSAPLAIGLSVALGHL. The Extracellular segment spans residues 182 to 186; that stretch reads LAIDY. The stretch at 187–199 is an intramembrane region; it reads TGCGINPARSFGS. The NPA 2 signature appears at 192–194; sequence NPA. Residues 200–206 lie on the Extracellular side of the membrane; sequence AVITHNF. Asn205 carries an N-linked (GlcNAc...) asparagine glycan. Residues 207 to 224 form a helical membrane-spanning segment; sequence SNHWIFWVGPFIGGALAV. At 225–269 the chain is on the cytoplasmic side; it reads LIYDFILAPRSSDLTDRVKVWTSGQVEEYDLDADDINSRVEMKPK. Ser247 is subject to Phosphoserine. Phosphotyrosine is present on Tyr253. Ser262 is subject to Phosphoserine.

It belongs to the MIP/aquaporin (TC 1.A.8) family. Homotetramer; each monomer provides an independent water pore. Component of the ankyrin-1 complex in the erythrocyte, composed of ANK1, RHCE, RHAG, SLC4A1, EPB42, GYPA, GYPB and AQP1. Interacts with EPHB2; involved in endolymph production in the inner ear. Identified in a complex with STOM. Interacts (via the N-terminal) with ANK1 (via ANK 1-5 repeats). Interacts (via the C-terminal) with EPB42. In terms of tissue distribution, detected in erythrocytes (at protein level). Expressed in a number of tissues including erythrocytes, renal tubules, retinal pigment epithelium, heart, lung, skeletal muscle, kidney and pancreas. Weakly expressed in brain, placenta and liver.

It is found in the cell membrane. It carries out the reaction H2O(in) = H2O(out). The enzyme catalyses nitric oxide(out) = nitric oxide(in). It catalyses the reaction CO2(out) = CO2(in). The catalysed reaction is glycerol(in) = glycerol(out). It carries out the reaction H2O2(out) = H2O2(in). The enzyme catalyses K(+)(in) = K(+)(out). It catalyses the reaction Na(+)(in) = Na(+)(out). Its activity is regulated as follows. The water channel activity is inhibited by P-choloromercuribenzene sulphonate and diethylpyrocarbonate(DPPC). The glycerol channel activity is inhibited by P-choloromercuribenzene sulphonate, diethylpyrocarbonate(DPPC), phloretin and Cu(2+). Inhibited by mercury. In terms of biological role, forms a water channel that facilitates the transport of water across cell membranes, playing a crucial role in water homeostasis in various tissues. Could also be permeable to small solutes including hydrogen peroxide, glycerol and gases such as amonnia (NH3), nitric oxide (NO) and carbon dioxide (CO2). Recruited to the ankyrin-1 complex, a multiprotein complex of the erythrocyte membrane, it could be part of a CO2 metabolon, linking facilitated diffusion of CO2 across the membrane, anion exchange of Cl(-)/HCO3(-) and interconversion of dissolved CO2 and carbonic acid in the cytosol. In vitro, it shows non-selective gated cation channel activity and may be permeable to cations like K(+) and Na(+) in vivo. The sequence is that of Aquaporin-1 from Homo sapiens (Human).